Reading from the N-terminus, the 573-residue chain is Estrogen receptor beta (573 aa).

Residues 15–170 form a modulating region; the sequence is QEVDSSKVGE…CFAGKGDMHF (156 aa). NR C4-type zinc fingers lie at residues 171–191 and 207–231; these read CAVC…CEGC and CPAT…LRKC. Positions 171–236 form a DNA-binding region, nuclear receptor; the sequence is CAVCHDYASG…RLRKCYEVGM (66 aa). In terms of domain architecture, NR LBD spans 291–527; sequence TPEQLINRII…DLLLEMLDAN (237 aa). Composition is skewed to low complexity over residues 534-552 and 559-573; these read MSAS…AQSQ and CSGE…SSTI. Residues 534–573 are disordered; the sequence is MSASYSSQPSPWSQAAQSQPGPPPSCSGECPCPPKESSTI.

It belongs to the nuclear hormone receptor family. NR3 subfamily. In terms of assembly, binds DNA as a homodimer. Can form a heterodimer with ER-alpha. Liver.

The protein resides in the nucleus. Its function is as follows. Binds estrogens with an affinity similar to that of ER-alpha, and activates expression of reporter genes containing estrogen response elements (ERE) in an estrogen-dependent manner. This Anguilla japonica (Japanese eel) protein is Estrogen receptor beta (esr2).